A 351-amino-acid chain; its full sequence is N6-Methyl-AMP deaminase (351 aa).

Positions 23 and 25 each coordinate Zn(2+). N(6)-methyl-AMP is bound by residues His-25, Asn-27, His-73, 105 to 108 (STPR), Asp-147, and Gly-180. His-207 serves as a coordination point for Zn(2+). Glu-210, Asp-292, and Asp-293 together coordinate N(6)-methyl-AMP. The active-site Proton donor is Glu-210. Asp-292 contributes to the Zn(2+) binding site.

The protein belongs to the metallo-dependent hydrolases superfamily. Adenosine and AMP deaminases family. Monomer. It depends on Zn(2+) as a cofactor.

It carries out the reaction N(6)-methyl-AMP + H2O + H(+) = IMP + methylamine. Functionally, catalyzes the hydrolysis of the free cytosolic methylated adenosine nucleotide N(6)-methyl-AMP (N6-mAMP) to produce inositol monophosphate (IMP) and methylamine. Is required for the catabolism of cytosolic N6-mAMP, which is derived from the degradation of mRNA containing N6-methylated adenine (m6A). In Bos taurus (Bovine), this protein is N6-Methyl-AMP deaminase.